A 155-amino-acid polypeptide reads, in one-letter code: 6,7-dimethyl-8-ribityllumazine synthase (155 aa).

Residues Phe24, 58-60, and 82-84 each bind 5-amino-6-(D-ribitylamino)uracil; these read AFE and VII. Residue 87-88 coordinates (2S)-2-hydroxy-3-oxobutyl phosphate; that stretch reads ST. Catalysis depends on His90, which acts as the Proton donor. Phe115 lines the 5-amino-6-(D-ribitylamino)uracil pocket. Arg129 is a (2S)-2-hydroxy-3-oxobutyl phosphate binding site.

It belongs to the DMRL synthase family.

The catalysed reaction is (2S)-2-hydroxy-3-oxobutyl phosphate + 5-amino-6-(D-ribitylamino)uracil = 6,7-dimethyl-8-(1-D-ribityl)lumazine + phosphate + 2 H2O + H(+). It participates in cofactor biosynthesis; riboflavin biosynthesis; riboflavin from 2-hydroxy-3-oxobutyl phosphate and 5-amino-6-(D-ribitylamino)uracil: step 1/2. Its function is as follows. Catalyzes the formation of 6,7-dimethyl-8-ribityllumazine by condensation of 5-amino-6-(D-ribitylamino)uracil with 3,4-dihydroxy-2-butanone 4-phosphate. This is the penultimate step in the biosynthesis of riboflavin. The polypeptide is 6,7-dimethyl-8-ribityllumazine synthase (Pelodictyon phaeoclathratiforme (strain DSM 5477 / BU-1)).